We begin with the raw amino-acid sequence, 506 residues long: MEFHESSPFVFITRGFIFIAISIAVLRRIISKKTKTLPPGPWKLPLIGNLHQFLGSVPYQILRDLAQKNGPLMHLQLGEVSAIVAASPQMAKEITKTLDLQFADRPVIQALRIVTYDYLDISFNAYGKYWRQLRKIFVQELLTSKRVRSFCSIREDEFSNLVKTINSANGKSINLSKLMTSCTNSIINKVAFGKVRYEREVFIDLINQILALAGGFKLVDLFPSYKILHVLEGTERKLWEIRGKIDKILDKVIDEHRENSSRTGKGNGCNGQEDIVDILLRIEEGGDLDLDIPFGNNNIKALLFDIIAGGTETSSTAVDWAMSEMMRNPHVMSKAQKEIREAFNGKEKIEENDIQNLKYLKLVIQETLRLHPPAPLLMRQCREKCEIGGYHIPVGTKAFINVWAIGRDPAYWPNPESFIPERFDDNTYEFTKSEHHAFEYLPFGAGRRMCPGISFGLANVELPLALLLYHFNWQLPDGSTTLDMTEATGLAARRKYDLQLIATSYA.

The Lumenal segment spans residues 1–5 (MEFHE). A helical membrane pass occupies residues 6–26 (SSPFVFITRGFIFIAISIAVL). Over 27–506 (RRIISKKTKT…DLQLIATSYA (480 aa)) the chain is Cytoplasmic. Residue C450 participates in heme binding.

This sequence belongs to the cytochrome P450 family. Heme serves as cofactor. Expressed in leaf epidermis.

Its subcellular location is the endoplasmic reticulum membrane. The catalysed reaction is 16-methoxytabersonine + reduced [NADPH--hemoprotein reductase] + O2 = (3R)-1,2-didehydro-3-hydroxy-16-methoxy-2,3-dihydrotabersonine + oxidized [NADPH--hemoprotein reductase] + H2O + H(+). It catalyses the reaction (-)-tabersonine + reduced [NADPH--hemoprotein reductase] + O2 = (3R)-1,2-didehydro-3-hydroxy-2,3-dihydrotabersonine + oxidized [NADPH--hemoprotein reductase] + H2O + H(+). It participates in alkaloid biosynthesis; vindoline biosynthesis. In terms of biological role, cytochrome P450 catalyzing the monooxygenation of 16-methoxytabersonine, 16-hydroxytabersonine and tabersonine, but not of 2,3-dihydrotabersonine. Converts the C2,C3 alkene of tabersonine and 16-methoxytabersonine to the epoxides, which then spontaneously open to form the corresponding imine alcohols. Inactive in converting amyrin to ursolic acid. The polypeptide is Tabersonine 3-oxygenase (Catharanthus roseus (Madagascar periwinkle)).